The primary structure comprises 429 residues: Enolase (429 aa).

Residue Q163 participates in (2R)-2-phosphoglycerate binding. Catalysis depends on E205, which acts as the Proton donor. 3 residues coordinate Mg(2+): D242, E287, and D314. (2R)-2-phosphoglycerate is bound by residues K339, R368, S369, and K390. Residue K339 is the Proton acceptor of the active site.

Belongs to the enolase family. Requires Mg(2+) as cofactor.

It is found in the cytoplasm. Its subcellular location is the secreted. The protein resides in the cell surface. It catalyses the reaction (2R)-2-phosphoglycerate = phosphoenolpyruvate + H2O. It participates in carbohydrate degradation; glycolysis; pyruvate from D-glyceraldehyde 3-phosphate: step 4/5. Functionally, catalyzes the reversible conversion of 2-phosphoglycerate (2-PG) into phosphoenolpyruvate (PEP). It is essential for the degradation of carbohydrates via glycolysis. This is Enolase from Magnetococcus marinus (strain ATCC BAA-1437 / JCM 17883 / MC-1).